Here is a 231-residue protein sequence, read N- to C-terminus: Ribonuclease 3 (231 aa).

Positions 5–134 (QKKLKNDYGL…FLGALFIDQG (130 aa)) constitute an RNase III domain. A Mg(2+)-binding site is contributed by glutamate 47. Residue aspartate 51 is part of the active site. Residues asparagine 120 and glutamate 123 each contribute to the Mg(2+) site. The active site involves glutamate 123. A DRBM domain is found at 160–229 (DYKTELQEVL…AENAIKGQNH (70 aa)).

This sequence belongs to the ribonuclease III family. As to quaternary structure, homodimer. Requires Mg(2+) as cofactor.

Its subcellular location is the cytoplasm. It catalyses the reaction Endonucleolytic cleavage to 5'-phosphomonoester.. Digests double-stranded RNA. Involved in the processing of primary rRNA transcript to yield the immediate precursors to the large and small rRNAs (23S and 16S). Processes some mRNAs, and tRNAs when they are encoded in the rRNA operon. Processes pre-crRNA and tracrRNA of type II CRISPR loci if present in the organism. This Lactococcus lactis subsp. cremoris (strain MG1363) protein is Ribonuclease 3.